Reading from the N-terminus, the 660-residue chain is Potassium voltage-gated channel subfamily KQT member 1 (660 aa).

Polar residues predominate over residues 1 to 18 (MSSEVKSRWSGSGSQKSG). The disordered stretch occupies residues 1–67 (MSSEVKSRWS…PESRAADSRA (67 aa)). At 1 to 113 (MSSEVKSRWS…YNFLERPTGW (113 aa)) the chain is on the cytoplasmic side. Residues 53 to 67 (STDKNPESRAADSRA) show a composition bias toward basic and acidic residues. Residues 114–135 (KCFIYHFTVFLIVLVCLIFSVM) traverse the membrane as a helical segment. The Extracellular portion of the chain corresponds to 136-146 (STIEQYHYFAN). Residues 147-169 (RALVWMEIVLVVFFGTEYIVRLW) traverse the membrane as a helical segment. The Cytoplasmic portion of the chain corresponds to 170–185 (SAGCRSKYVGFWGRLR). The helical transmembrane segment at 186-211 (FARKPISIIDLIVVVASVIVLCVGSN) threads the bilayer. The Extracellular portion of the chain corresponds to 212 to 219 (GQVFATSA). The chain crosses the membrane as a helical; Voltage-sensor span at residues 220–235 (IRGIRFLQILRMLHVD). The Cytoplasmic portion of the chain corresponds to 236–253 (RQGGTWRLLGSVVFIHRQ). Gln237 is an a 1,2-diacyl-sn-glycero-3-phospho-(1D-myo-inositol-4,5-bisphosphate) binding site. The chain crosses the membrane as a helical span at residues 254 to 276 (ELITTLYIGFLGLIFSSYFVYLA). The Extracellular segment spans residues 277–292 (EKDAVDDSGSQQFGSY). Positions 293–313 (ADALWWGVVTVTTIGYGDKVP) form an intramembrane region, pore-forming. Residues 314–315 (QT) lie on the Extracellular side of the membrane. Residues 316 to 341 (WIGRTIASCFSVFAISFFALPAGILG) traverse the membrane as a helical segment. The Cytoplasmic segment spans residues 342-660 (SGFALKVQQK…RKDQDNQPDL (319 aa)). The segment at 399–426 (SPSPKTKKSVGKRKKLKTDKDNGLNSEK) is disordered. Residues 403–415 (KTKKSVGKRKKLK) are compositionally biased toward basic residues. A coiled-coil region spans residues 579–615 (KNTIGARLNRVEEKFVHMDQKLNTITDMLHHLVAHQQ).

This sequence belongs to the potassium channel family. KQT (TC 1.A.1.15) subfamily. Kv7.1/KCNQ1 sub-subfamily. In terms of assembly, tetramer. Heterotetramer with KCNE1; targets to the membrane raft. Interacts (via C-terminus) with CALM; forms a heterotetramer in a calcium-independent manner. Interacts with KCNE2; form a heterooligomer complex that targets to the membrane raft and leading to currents with an apparently instantaneous activation, a rapid deactivation process and a linear current-voltage relationship and decreases the amplitude of the outward current. Interacts with KCNE3; four KCNE3 molecules are bound to one KCNQ1 tetramer (4:4 KCNQ1:KCNE3 stoichiometry); alters membrane raft localization; affects KCNQ1 structure and gating properties. Interacts with KCNE4; impairs KCNQ1 localization in lipid rafts and inhibits voltage-gated potassium channel activity. Interacts with KCNE5; impairs KCNQ1 localization in lipid rafts and only conducts current upon strong and continued depolarization. In terms of tissue distribution, expressed only in rectal gland and heart. Faintly expressed in intestine. Undetectable in kidney, brain, testis, liver and gills.

The protein localises to the cell membrane. It localises to the cytoplasmic vesicle membrane. It is found in the membrane raft. Its subcellular location is the endoplasmic reticulum. The protein resides in the basolateral cell membrane. The catalysed reaction is K(+)(in) = K(+)(out). Its activity is regulated as follows. PIP2 molecule is essential to activate KCNQ channels by inducing the coupling of the voltage-sensing domain (VSD) and the pore-forming domain (PD). Upon channel activation, PIP2 disrupts the VSD-calmodulin/CALM interactions, causing the release of CALM from the VSD which triggers the opening of the gate. Calcium potentiates KCNQ1 channel current through calcium-bound CALM. Calcium-bound CALM competes with PIP2 to stabilize the channel open state. Pore-forming subunit of the voltage-gated potassium (Kv) channel involved in the regulation of cardiomyocyte excitability and important in normal development and functions of myocardium, inner ear, stomach and colon. Associates with KCNE beta subunits that modulates current kinetics. Induces a voltage-dependent by rapidly activating and slowly deactivating potassium-selective outward current. Also promotes a delayed voltage activated potassium current showing outward rectification characteristic. During beta-adrenergic receptor stimulation participates in cardiac repolarization by associating with KCNE1 to form the I(Ks) cardiac potassium current that increases the amplitude and slows down the activation kinetics of outward potassium current I(Ks). When associated with KCNE3, forms the potassium channel that is important for cyclic AMP-stimulated intestinal secretion of chloride ions. When associated with KCNE2, forms a heterooligomer complex leading to currents with an apparently instantaneous activation, a rapid deactivation process and a linear current-voltage relationship and decreases the amplitude of the outward current. When associated with KCNE4, inhibits voltage-gated potassium channel activity. When associated with KCNE5, this complex only conducts current upon strong and continued depolarization. The polypeptide is Potassium voltage-gated channel subfamily KQT member 1 (Squalus acanthias (Spiny dogfish)).